We begin with the raw amino-acid sequence, 184 residues long: Peptide deformylase 2 (184 aa).

Residues C110 and H153 each contribute to the Fe cation site. E154 is an active-site residue. Position 157 (H157) interacts with Fe cation.

This sequence belongs to the polypeptide deformylase family. Fe(2+) serves as cofactor.

It catalyses the reaction N-terminal N-formyl-L-methionyl-[peptide] + H2O = N-terminal L-methionyl-[peptide] + formate. In terms of biological role, removes the formyl group from the N-terminal Met of newly synthesized proteins. Requires at least a dipeptide for an efficient rate of reaction. N-terminal L-methionine is a prerequisite for activity but the enzyme has broad specificity at other positions. This chain is Peptide deformylase 2, found in Bacillus cereus (strain ATCC 14579 / DSM 31 / CCUG 7414 / JCM 2152 / NBRC 15305 / NCIMB 9373 / NCTC 2599 / NRRL B-3711).